Here is a 1586-residue protein sequence, read N- to C-terminus: MSEPTKISILGRESIVADFGLWRNFVAKDLISDLSSTTYVLVTDTNLGSLYTPTFQKTFEAAAASITPAPRLLIHHVAPGESSKSRQTKADIEDWMLSQNPPCGRDTVIIALGGGVIGDLIGFVAATYMRGVRFVQVPTTLLAMVDSSIGGKTAIDTPLGKNLIGSIWQPSRIYIDLEFLETLPVREFINGMAEVIKTAAISSEEEFTALEDNADLILAAVRSEPKAGQGRFGGIRDILKARILASARHKAFVVSADEREGGLRNLLNWGHSIGHAIEAILTPQILHGECVAIGMVKEAELARHLGILKGVAVARVVKCISAYGLPTSMKDARVRKLTAGKHCSVDQLLFNMALDKKNDGPKKKVVLLSAIGRTHEPKASVVSNDDIGVVLAPSVEVHPGVPKSLNVTCAPPGSKSISNRALVLAALGSGTCRVKNLLHSDDTEVMLNALERLGAATFSWEEEGEVLVVNGKGGKIIASPTPLYLGNAGTASRFLTTVATLATPSSVDSSVLTGNNRMKQRPIGDLVDALTVNGAGVEYMESKGCLPLKIAASGGFAGGKINLAAKVSSQYVSSLLMCAPYAKEPVTLKLVGGKPISQPYIDMTTAMMRSFGIDVKKSTTEEHTYHIPQGHYVNPAEYIVESDASSATYPLAIAAVTGTTCTVPNIGSKSLQGDARFAVDVLRPMGCSVVQTDTSTTVTGPTDGVLQPLPDVDMEPMTDAFLTASVLAAVAQGKGANHTTRIYGIANQRVKECNRIKAMKDELAKFGVICREHDDGLEIDGIERSSLRQPSGGVFCYDDHRVAFSFSVLSLIAPQSTLILEKECVGKTWPGWWDALKQMFSVNLNGKELAEAEHAASSDEKRSSASVFIIGMRGAGKTTTGNWVAKALDRRFIDLDTELETSEGMTIPDIIKTRGWEGFRDAELAVLKRVLKDHPTGYVFACGGGVVEMPEARKLLTDYHKSKGNVLLIMRDIKLVMDFLQIDKTRPAYVEDMMGVWLRRKPWFQECSNIQYYSQHSTSTELALASEDFTRFMRVVTGQVDSLSLIKKKKHSFFVSLTLPDVEPSGDIITEACVGSDAVELRVDLLKDPAVDGDIPSIDYVNEQMSLLRRRTTLPVIFTIRTKSQGGRFPDDAHDAAMQLYRLAFRCGCEFVDLEIAFPDAMLRAVTEMKGYSKIIASHHDPKGTLSWANMSWIPSYNRALEYGDVIKLVGVANTLDDNNALRKFKTWAEEAHDVPLIAINMGDSGQLSRILNGFMTPVSHPSLPFKAAPGQLSAAEIRRGLSLMGEIKAQKFAIFGSPVSGSRSPALHNTLFAKMGLPHDYSRLETTKVEDVKDFIRAPDFGGASVTIPLKLDIMPLLDEVAQEAEIIGAVNTIVRVSNGNNPPRLIGYNTDWQGMIRCMRNAGVYGSTGSQSAVVIGGGGTARAAIFALHNMGFSPIYVVGRTASKLESMVSTFPTNYNIRVVDNRAQLDTVPQVAIGTIPADRPIDPVMRETLCHMFERAQEIDGTLIGKSSDTSKHRVLLEMAYKPAVTALMQLASDAGWSTIPGLEVLVGQGVHQFVHWTGITPLYHEARVSKHLDYFLSF.

Residues 1-384 (MSEPTKISIL…HEPKASVVSN (384 aa)) form a 3-dehydroquinate synthase region. NAD(+) is bound by residues 44-46 (DTN), 81-84 (ESSK), 114-116 (GGV), and aspartate 119. Arginine 130 contacts 7-phospho-2-dehydro-3-deoxy-D-arabino-heptonate. 139 to 140 (TT) lines the NAD(+) pocket. Residues aspartate 146 and lysine 152 each coordinate 7-phospho-2-dehydro-3-deoxy-D-arabino-heptonate. Lysine 161 contributes to the NAD(+) binding site. 7-phospho-2-dehydro-3-deoxy-D-arabino-heptonate is bound at residue asparagine 162. Residues 179-182 (FLET) and asparagine 190 contribute to the NAD(+) site. Glutamate 194 is a binding site for Zn(2+). 7-phospho-2-dehydro-3-deoxy-D-arabino-heptonate contacts are provided by residues 194–197 (EVIK) and lysine 250. Catalysis depends on glutamate 260, which acts as the Proton acceptor; for 3-dehydroquinate synthase activity. Residues 264 to 268 (RNLLN) and histidine 271 contribute to the 7-phospho-2-dehydro-3-deoxy-D-arabino-heptonate site. Histidine 271 provides a ligand contact to Zn(2+). Histidine 275 serves as the catalytic Proton acceptor; for 3-dehydroquinate synthase activity. Positions 287 and 356 each coordinate 7-phospho-2-dehydro-3-deoxy-D-arabino-heptonate. Histidine 287 is a binding site for Zn(2+). The EPSP synthase stretch occupies residues 397 to 842 (VHPGVPKSLN…WDALKQMFSV (446 aa)). The active-site For EPSP synthase activity is the cysteine 824. Residues 864-1056 (SASVFIIGMR…KKKKHSFFVS (193 aa)) are shikimate kinase. Residue 871–878 (GMRGAGKT) participates in ATP binding. A 3-dehydroquinase region spans residues 1057–1277 (LTLPDVEPSG…AAPGQLSAAE (221 aa)). The active-site Proton acceptor; for 3-dehydroquinate dehydratase activity is histidine 1180. The Schiff-base intermediate with substrate; for 3-dehydroquinate dehydratase activity role is filled by lysine 1208. The shikimate dehydrogenase stretch occupies residues 1290-1586 (AQKFAIFGSP…SKHLDYFLSF (297 aa)).

It in the N-terminal section; belongs to the sugar phosphate cyclases superfamily. Dehydroquinate synthase family. This sequence in the 2nd section; belongs to the EPSP synthase family. In the 3rd section; belongs to the shikimate kinase family. The protein in the 4th section; belongs to the type-I 3-dehydroquinase family. It in the C-terminal section; belongs to the shikimate dehydrogenase family. In terms of assembly, homodimer. Zn(2+) serves as cofactor.

It localises to the cytoplasm. The catalysed reaction is 7-phospho-2-dehydro-3-deoxy-D-arabino-heptonate = 3-dehydroquinate + phosphate. It carries out the reaction 3-dehydroquinate = 3-dehydroshikimate + H2O. The enzyme catalyses shikimate + NADP(+) = 3-dehydroshikimate + NADPH + H(+). It catalyses the reaction shikimate + ATP = 3-phosphoshikimate + ADP + H(+). The catalysed reaction is 3-phosphoshikimate + phosphoenolpyruvate = 5-O-(1-carboxyvinyl)-3-phosphoshikimate + phosphate. It functions in the pathway metabolic intermediate biosynthesis; chorismate biosynthesis; chorismate from D-erythrose 4-phosphate and phosphoenolpyruvate: step 2/7. The protein operates within metabolic intermediate biosynthesis; chorismate biosynthesis; chorismate from D-erythrose 4-phosphate and phosphoenolpyruvate: step 3/7. It participates in metabolic intermediate biosynthesis; chorismate biosynthesis; chorismate from D-erythrose 4-phosphate and phosphoenolpyruvate: step 4/7. Its pathway is metabolic intermediate biosynthesis; chorismate biosynthesis; chorismate from D-erythrose 4-phosphate and phosphoenolpyruvate: step 5/7. It functions in the pathway metabolic intermediate biosynthesis; chorismate biosynthesis; chorismate from D-erythrose 4-phosphate and phosphoenolpyruvate: step 6/7. The AROM polypeptide catalyzes 5 consecutive enzymatic reactions in prechorismate polyaromatic amino acid biosynthesis. This is Pentafunctional AROM polypeptide from Penicillium rubens (strain ATCC 28089 / DSM 1075 / NRRL 1951 / Wisconsin 54-1255) (Penicillium chrysogenum).